A 90-amino-acid chain; its full sequence is MGQGKSREEKGTNSTNRAEILPDTTYLGPLSCKSCWQKFDSLVRCHDHYLCRHCLNLLLSVSDRCPLCKYPLPTRLKISTAPSSPPPYEE.

Gly2 carries the N-myristoyl glycine; by host lipid modification. An RING-type; atypical zinc finger spans residues Cys32–Cys68. Residues Pro85–Tyr88 carry the PPXY motif motif.

It belongs to the arenaviridae Z protein family. Interacts with protein NP; this interaction probably directs the encapsidated genome to budding sites. Interacts (via RING-type zinc finger) with polymerase L; this interaction inhibits viral transcription and replication, Z partially blocks the product exit tunnel for the releasing nascent RNA product. Interacts with the glycoprotein complex; this interaction plays a role in virion budding. Interacts (via RING-type zinc finger) with host EIF4E; this interaction results in conformational changes of both interacting proteins and reduces EIF4E affinity for its substrate, the 5'-m7 G cap structure. Interacts (via late-budding domain) with host TSG101; this interaction is essential for budding and release of viral particles. Interacts with host RPLP0; this interaction may serve to load ribosome-like particles inside the virion. Interacts with host PML; this interaction induces PML bodies redistribution in the cytoplasm upon viral infection. Post-translationally, myristoylation is required for the role of RING finger protein Z in assembly and budding.

It localises to the virion. Its subcellular location is the host cytoplasm. It is found in the host perinuclear region. The protein resides in the host cell membrane. Functionally, plays a crucial role in virion assembly and budding. Expressed late in the virus life cycle, it acts as an inhibitor of viral transcription and RNA synthesis by interacting with the viral polymerase L. Presumably recruits the NP encapsidated genome to cellular membranes at budding sites via direct interaction with NP. Plays critical roles in the final steps of viral release by interacting with host TSG101, a member of the vacuolar protein-sorting pathway and using other cellular host proteins involved in vesicle formation pathway. The budding of the virus progeny occurs after association of protein Z with the viral glycoprotein complex SSP-GP1-GP2 at the cell periphery, step that requires myristoylation of protein Z. Also selectively represses protein production by associating with host EIF4E. In cell-based minigenome assay, has an inhibitory effect on the ribonucleoprotein machinery (vRNP), which is responsible for the replication and transcription of the viral genome. The chain is RING finger protein Z from Homo sapiens (Human).